A 266-amino-acid chain; its full sequence is Protein PYRICULARIA ORYZAE RESISTANCE 21 (266 aa).

Positions 1 to 68 (MGILVILVDL…IWCKAGKIIK (68 aa)) constitute an HMA domain. Cys-12 and Cys-15 together coordinate a metal cation. The tract at residues 129–156 (CEKPKPCEKPPPCKPEEPPKPPPEKPPP) is disordered. Residues 142 to 156 (KPEEPPKPPPEKPPP) are compositionally biased toward basic and acidic residues.

Functionally, involved in defense responses. Contributes to slowing defense responses toward Magnaporthe oryzae. This chain is Protein PYRICULARIA ORYZAE RESISTANCE 21, found in Oryza sativa subsp. japonica (Rice).